Reading from the N-terminus, the 519-residue chain is RxLR effector protein PITG_15278 (519 aa).

Positions 1–24 (MHFIYRVVLVLAAFALFKVDSISA) are cleaved as a signal peptide. The RxLR-dEER signature appears at 49–59 (RQLRVMDDNER).

This sequence belongs to the RxLR effector family.

It is found in the secreted. Its subcellular location is the host cytoplasm. Effector that enhances P.infestans colonization of Nicotiana benthamiana leaves. This chain is RxLR effector protein PITG_15278, found in Phytophthora infestans (strain T30-4) (Potato late blight agent).